A 662-amino-acid chain; its full sequence is MSEDRSAYPFSTFLDQHSGQLNASDVPPELWHSLYKKLSDQTFDAGDHFQIICEMNEDDEKTLFVRALEDLHNNDEDNIFLIDHFMSFSSESARKCVESTEGLVERLAGLFGIDTDSTEEVDETVEKIETSVEKEEAEHAKKISSETGNLPRHESVDARLSSYSVDDPKNELTEKVLKALWKYSQTYSVSYQLDNGEIEKKSVWYVMDDFGTRVRHSTEPNVRIVPLMFLPQNCAYSIMFLTKPVNTDEEIMMDWASNVITAQHPEWRKYIEQPWAAQDFSKETMIPDAPTLEYFTSGRNPDFLAGPTEQQTCQSAIFTSLPILKKRKIKVYADDTQLTEHLKNHKVEYVDDIKKADVIWMIKHFHDYKQLSEENPCGMINQFPFESCITVKDLLAACAMRDPAKNDWYQLTYNLNTQLPEFVARFQNRELNGQHNVWIVKPWNLARGMDMTVTEDLNQIIRMIETGPKIVCEYIPRPLLFPRPDNGNKVKFDLRYIVFLNGIAPVTAYVYNRFWIRFAINEFSLSNFEDVETHFTVFNYLDKEKILQMKCENFIETIEKAYPRIQWSEVQKDINLTIRKAIEAAAKEEAPRGVAPNVQSRAMYGVDIMLQHGDNDVIKSTLLEINFMPDTTRACQYYPDFADTVFETLFLDEIDPTKVTPI.

The region spanning 324 to 660 (LKKRKIKVYA…LDEIDPTKVT (337 aa)) is the TTL domain. Residues 472 to 475 (CEYI), K491, and D493 each bind ATP.

Belongs to the tubulin--tyrosine ligase family.

In terms of biological role, regulates microtubule dynamics in uterine muscle cells. This chain is Tubulin--tyrosine ligase-like protein 12, found in Caenorhabditis elegans.